The chain runs to 99 residues: NADH-quinone oxidoreductase subunit K (99 aa).

3 consecutive transmembrane segments (helical) span residues 3 to 23, 28 to 48, and 59 to 79; these read PTYYLLLSALLFSIGAVGVLV, IVVFMCVELMLNAVNLTLVTF, and VMAFFVMVVAAAEVVVGLAII.

It belongs to the complex I subunit 4L family. NDH-1 is composed of 14 different subunits. Subunits NuoA, H, J, K, L, M, N constitute the membrane sector of the complex.

The protein resides in the cell membrane. It catalyses the reaction a quinone + NADH + 5 H(+)(in) = a quinol + NAD(+) + 4 H(+)(out). Its function is as follows. NDH-1 shuttles electrons from NADH, via FMN and iron-sulfur (Fe-S) centers, to quinones in the respiratory chain. The immediate electron acceptor for the enzyme in this species is believed to be a menaquinone. Couples the redox reaction to proton translocation (for every two electrons transferred, four hydrogen ions are translocated across the cytoplasmic membrane), and thus conserves the redox energy in a proton gradient. The sequence is that of NADH-quinone oxidoreductase subunit K from Saccharopolyspora erythraea (strain ATCC 11635 / DSM 40517 / JCM 4748 / NBRC 13426 / NCIMB 8594 / NRRL 2338).